We begin with the raw amino-acid sequence, 637 residues long: Probable polypeptide N-acetylgalactosaminyltransferase 8 (637 aa).

Over 1–6 (MMFWRK) the chain is Cytoplasmic. Residues 7–29 (LPKALFIGLTLAIAVNLLLVFSS) traverse the membrane as a helical; Signal-anchor for type II membrane protein segment. At 30–637 (KGTLQNLFTG…VRDWGQTNSQ (608 aa)) the chain is on the lumenal side. N-linked (GlcNAc...) asparagine glycosylation is found at Asn-85, Asn-107, and Asn-160. 5 disulfide bridges follow: Cys-171-Cys-404, Cys-395-Cys-474, Cys-509-Cys-525, Cys-556-Cys-571, and Cys-599-Cys-617. The catalytic subdomain A stretch occupies residues 180–294 (LPSLSVILIF…VGWAEPILAR (115 aa)). 2 residues coordinate substrate: Asp-221 and Arg-255. Residues Asp-278, His-280, and His-409 each contribute to the Mn(2+) site. The segment at 351 to 412 (PVKSPSIMGI…PCSRIAHLER (62 aa)) is catalytic subdomain B. The substrate site is built by Arg-412 and Tyr-417. Residues 496-634 (GYGRMKNLLD…QHTVRDWGQT (139 aa)) enclose the Ricin B-type lectin domain.

This sequence belongs to the glycosyltransferase 2 family. GalNAc-T subfamily. Requires Mn(2+) as cofactor. As to expression, widely expressed. Expressed in heart, skeletal muscle, kidney, liver, small intestine and placenta. Weakly expressed in colon, thymus, spleen, lung and leukocyte.

The protein localises to the golgi apparatus membrane. It carries out the reaction L-seryl-[protein] + UDP-N-acetyl-alpha-D-galactosamine = a 3-O-[N-acetyl-alpha-D-galactosaminyl]-L-seryl-[protein] + UDP + H(+). It catalyses the reaction L-threonyl-[protein] + UDP-N-acetyl-alpha-D-galactosamine = a 3-O-[N-acetyl-alpha-D-galactosaminyl]-L-threonyl-[protein] + UDP + H(+). Its pathway is protein modification; protein glycosylation. Its function is as follows. Probably catalyzes the initial reaction in O-linked oligosaccharide biosynthesis, the transfer of an N-acetyl-D-galactosamine residue to a serine or threonine residue on the protein receptor. The chain is Probable polypeptide N-acetylgalactosaminyltransferase 8 (GALNT8) from Homo sapiens (Human).